Here is a 218-residue protein sequence, read N- to C-terminus: Insulin-induced gene 2 protein (218 aa).

The Cytoplasmic segment spans residues 1-21 (MGETDNAPRGPPSFLPHKMNL). Residues 22–44 (LLRGLLLFLIGVFLALVLNLLQV) traverse the membrane as a helical segment. Residues 45-63 (QRNVTLFPPDVLSSLFSSA) are Lumenal-facing. The helical transmembrane segment at 64 to 81 (WWVPLCCGTAAAAIGLLY) threads the bilayer. Residues 82 to 96 (PCIDRHLGEPHKFKR) lie on the Cytoplasmic side of the membrane. A helical membrane pass occupies residues 97-119 (EWSSVMRCVAVFVGINHASAKVD). Over 120–122 (FAN) the chain is Lumenal. A helical transmembrane segment spans residues 123–141 (NTQLSLTLAALSIGLWWTF). Residues 142–146 (DRSRS) lie on the Cytoplasmic side of the membrane. A helical membrane pass occupies residues 147-168 (GLGLGIGISFFATVVSQLLVYN). Topologically, residues 169 to 182 (GVYEYTAPDFLYVR) are lumenal. A helical transmembrane segment spans residues 183-200 (SWLPCIFFAGGITMGNIG). Over 201 to 218 (RQLEMYERLALVEKSHRD) the chain is Cytoplasmic. The short motif at 212–218 (VEKSHRD) is the KxHxx element.

The protein belongs to the INSIG family. In terms of assembly, interacts with scap; interaction is direct and only takes place in the presence of sterols; it prevents interaction between scap and the coat protein complex II (COPII). Associates with the SCAP-SREBP complex; association is mediated via its interaction with scap and only takes place in the presence of sterols.

It is found in the endoplasmic reticulum membrane. Functionally, oxysterol-binding protein that mediates feedback control of cholesterol synthesis by controlling both endoplasmic reticulum to Golgi transport of scap and degradation of hmgcr. Acts as a negative regulator of cholesterol biosynthesis by mediating the retention of the SCAP-SREBP complex in the endoplasmic reticulum, thereby blocking the processing of sterol regulatory element-binding proteins (SREBPs). Binds oxysterol, including 22-hydroxycholesterol, 24-hydroxycholesterol, 25-hydroxycholesterol and 27-hydroxycholesterol, regulating interaction with scap and retention of the SCAP-SREBP complex in the endoplasmic reticulum. In presence of oxysterol, interacts with scap, retaining the SCAP-SREBP complex in the endoplasmic reticulum, thereby preventing scap from escorting SREBPs to the Golgi. Sterol deprivation reduce oxysterol-binding, disrupting the interaction between insig2 and scap, thereby promoting Golgi transport of the SCAP-SREBP complex, followed by processing and nuclear translocation of SREBPs. Also regulates cholesterol synthesis by regulating degradation of hmgcr. This chain is Insulin-induced gene 2 protein, found in Xenopus tropicalis (Western clawed frog).